Here is a 143-residue protein sequence, read N- to C-terminus: MAKKITAYIKLQVKAAQANPSPPVGPALGQHGVNIMEFCKAFNARTQGIEPGLPTPVIITVYSDRSFTFETKSTPASVLLKKAAGLTSGSAHPNTVKVGTVTRAQLEDIAKAKNADLTAADMEAAVRTIAGSARSMGLNVEGV.

The protein belongs to the universal ribosomal protein uL11 family. Part of the ribosomal stalk of the 50S ribosomal subunit. Interacts with L10 and the large rRNA to form the base of the stalk. L10 forms an elongated spine to which L12 dimers bind in a sequential fashion forming a multimeric L10(L12)X complex. In terms of processing, one or more lysine residues are methylated.

Its function is as follows. Forms part of the ribosomal stalk which helps the ribosome interact with GTP-bound translation factors. In Pseudomonas savastanoi pv. phaseolicola (strain 1448A / Race 6) (Pseudomonas syringae pv. phaseolicola (strain 1448A / Race 6)), this protein is Large ribosomal subunit protein uL11.